The primary structure comprises 234 residues: Large ribosomal subunit protein uL1 (234 aa).

Belongs to the universal ribosomal protein uL1 family. In terms of assembly, part of the 50S ribosomal subunit.

Functionally, binds directly to 23S rRNA. The L1 stalk is quite mobile in the ribosome, and is involved in E site tRNA release. Its function is as follows. Protein L1 is also a translational repressor protein, it controls the translation of the L11 operon by binding to its mRNA. This is Large ribosomal subunit protein uL1 from Helicobacter hepaticus (strain ATCC 51449 / 3B1).